The primary structure comprises 442 residues: tRNA modification GTPase MnmE (442 aa).

Residues arginine 22, glutamate 79, and lysine 118 each contribute to the (6S)-5-formyl-5,6,7,8-tetrahydrofolate site. The region spanning glutamate 215–glutamine 365 is the TrmE-type G domain. Residue asparagine 225 coordinates K(+). GTP contacts are provided by residues asparagine 225 to serine 230, threonine 244 to threonine 250, and aspartate 269 to glycine 272. Serine 229 is a Mg(2+) binding site. 3 residues coordinate K(+): threonine 244, isoleucine 246, and threonine 249. Residue threonine 250 coordinates Mg(2+). Position 442 (lysine 442) interacts with (6S)-5-formyl-5,6,7,8-tetrahydrofolate.

This sequence belongs to the TRAFAC class TrmE-Era-EngA-EngB-Septin-like GTPase superfamily. TrmE GTPase family. As to quaternary structure, homodimer. Heterotetramer of two MnmE and two MnmG subunits. K(+) serves as cofactor.

Its subcellular location is the cytoplasm. Its function is as follows. Exhibits a very high intrinsic GTPase hydrolysis rate. Involved in the addition of a carboxymethylaminomethyl (cmnm) group at the wobble position (U34) of certain tRNAs, forming tRNA-cmnm(5)s(2)U34. The protein is tRNA modification GTPase MnmE of Mycoplasmopsis pulmonis (strain UAB CTIP) (Mycoplasma pulmonis).